A 371-amino-acid polypeptide reads, in one-letter code: Protein-tyrosine sulfotransferase 2 (371 aa).

Over 1–8 (MRVTMRRV) the chain is Cytoplasmic. The chain crosses the membrane as a helical; Signal-anchor for type II membrane protein span at residues 9–25 (LLAVGSVVALMVTLHLG). The Lumenal segment spans residues 26-371 (QQVLECQHVL…QVTQNTSSSH (346 aa)). 76 to 80 (RSGTT) provides a ligand contact to 3'-phosphoadenylyl sulfate. A disulfide bridge connects residues Cys-94 and Cys-154. Glu-97 (proton donor/acceptor) is an active-site residue. The interaction with peptide substrate stretch occupies residues 99-103 (RIIPR). The 3'-phosphoadenylyl sulfate site is built by Arg-181, Ser-189, and Arg-193. An intrachain disulfide couples Cys-223 to Cys-231. Residues Tyr-236, 283–292 (STDQVIKPVN), and Lys-298 contribute to the 3'-phosphoadenylyl sulfate site. 2 N-linked (GlcNAc...) asparagine glycosylation sites follow: Asn-341 and Asn-366.

Belongs to the protein sulfotransferase family.

The protein localises to the golgi apparatus membrane. The enzyme catalyses L-tyrosyl-[protein] + 3'-phosphoadenylyl sulfate = O-sulfo-L-tyrosine-[protein] + adenosine 3',5'-bisphosphate + H(+). Functionally, catalyzes the O-sulfation of tyrosine residues within acidic motifs of polypeptides, using 3'-phosphoadenylyl sulfate (PAPS) as cosubstrate. The chain is Protein-tyrosine sulfotransferase 2 (TPST2) from Gallus gallus (Chicken).